The following is a 424-amino-acid chain: Protein maelstrom 1 (424 aa).

A DNA-binding region (HMG box) is located at residues 2–69 (PPKKHSGFMM…LTRVKKERLN (68 aa)).

The protein belongs to the maelstrom family.

It is found in the cytoplasm. Its subcellular location is the nucleus. Functionally, involved both in the piRNA and miRNA metabolic processes. As a component of the meiotic nuage, plays a central role during oogenesis by repressing transposable elements and preventing their mobilization, which is essential for the germline integrity. Repression of transposable elements is mediated via the piRNA metabolic process, which mediates the repression of transposable elements during meiosis by forming complexes composed of piRNAs and Piwi proteins and governs the repression of transposons. As a nuclear component, it is required for proper differentiation in the germline stem cell (GSC) lineage by repressing microRNA-7 (miR-7), thereby acting as an indirect regulator of bag-of-marbles (Bam). Acts by binding to the promoter of miR-7 gene and repressing its expression; miR-7 repression alleviates the Bam repression by miR-7, thereby allowing differentiation in the germline stem cell (GSC) lineage. This Drosophila ananassae (Fruit fly) protein is Protein maelstrom 1 (mael1).